The sequence spans 565 residues: Oxygen-dependent choline dehydrogenase (565 aa).

6–35 (DYIIVGAGSAGNTLATRLTEDAGVTVLLLE) lines the FAD pocket. Residue histidine 475 is the Proton acceptor of the active site.

Belongs to the GMC oxidoreductase family. It depends on FAD as a cofactor.

It carries out the reaction choline + A = betaine aldehyde + AH2. The catalysed reaction is betaine aldehyde + NAD(+) + H2O = glycine betaine + NADH + 2 H(+). Its pathway is amine and polyamine biosynthesis; betaine biosynthesis via choline pathway; betaine aldehyde from choline (cytochrome c reductase route): step 1/1. Its function is as follows. Involved in the biosynthesis of the osmoprotectant glycine betaine. Catalyzes the oxidation of choline to betaine aldehyde and betaine aldehyde to glycine betaine at the same rate. The sequence is that of Oxygen-dependent choline dehydrogenase from Pseudomonas putida (strain GB-1).